Reading from the N-terminus, the 356-residue chain is Probable cytosolic iron-sulfur protein assembly protein 1 (356 aa).

WD repeat units follow at residues 34–73 (GHKR…IRAE), 89–128 (GHDS…DYEC), 134–173 (EHSQ…DWYC), 179–218 (AHSS…ECVE), 244–291 (HFSG…ATLR), and 319–356 (AHGS…RIWT).

It belongs to the WD repeat CIA1 family.

Its function is as follows. Essential component of the cytosolic iron-sulfur (Fe/S) protein assembly machinery. Required for the maturation of extramitochondrial Fe/S proteins. The protein is Probable cytosolic iron-sulfur protein assembly protein 1 of Malassezia globosa (strain ATCC MYA-4612 / CBS 7966) (Dandruff-associated fungus).